Here is a 64-residue protein sequence, read N- to C-terminus: Large ribosomal subunit protein bL28c (64 aa).

The protein belongs to the bacterial ribosomal protein bL28 family.

It localises to the plastid. The protein localises to the chloroplast. This is Large ribosomal subunit protein bL28c from Gracilaria tenuistipitata var. liui (Red alga).